Here is a 142-residue protein sequence, read N- to C-terminus: MAAMTVHLDIVSAESKIFSGRVASLQVTGSEGELGIMHGHAPLLSYIKPGMARIVKQDGSEEVFYLSGGILEVQPSTVSVLADVVMRAKDIDEQAALEAKRRAEAHMANAGADFNYDAAMVELAKAMAQLRVVETIKKNIAR.

This sequence belongs to the ATPase epsilon chain family. F-type ATPases have 2 components, CF(1) - the catalytic core - and CF(0) - the membrane proton channel. CF(1) has five subunits: alpha(3), beta(3), gamma(1), delta(1), epsilon(1). CF(0) has three main subunits: a, b and c.

It localises to the cell inner membrane. Functionally, produces ATP from ADP in the presence of a proton gradient across the membrane. The polypeptide is ATP synthase epsilon chain (Shewanella baltica (strain OS185)).